The chain runs to 886 residues: DNA repair and recombination protein RAD54B (886 aa).

A compositionally biased stretch (polar residues) spans 1 to 12 (MRRSAAPSQVQG). Positions 1–95 (MRRSAAPSQV…ASKEITESKA (95 aa)) are disordered. Phosphoserine is present on serine 14. Residues 47–62 (AEQSQNDPGVCSSNPC) show a composition bias toward polar residues. Basic and acidic residues-rich tracts occupy residues 67 to 76 (IPREVGDGTR) and 86 to 95 (ASKEITESKA). The Helicase ATP-binding domain occupies 291-458 (GMRAVGKCGA…FALVDFVNPG (168 aa)). 304–311 (DEMGLGKT) contributes to the ATP binding site. The DEGH box motif lies at 409–412 (DEGH). Residues 627–788 (KLLAVIHELR…HIQFSVEELK (162 aa)) form the Helicase C-terminal domain.

Belongs to the SNF2/RAD54 helicase family. As to quaternary structure, interacts with RAD51 through the NH2-terminal domain.

Its subcellular location is the nucleus. In terms of biological role, involved in DNA repair and mitotic recombination. May play an active role in recombination processes in concert with other members of the RAD52 epistasis group. This chain is DNA repair and recombination protein RAD54B (Rad54b), found in Mus musculus (Mouse).